A 585-amino-acid polypeptide reads, in one-letter code: Aspartate--tRNA ligase (585 aa).

L-aspartate is bound at residue E173. The segment at 197 to 200 is aspartate; it reads QTLK. Residue R219 coordinates L-aspartate. Residues 219 to 221 and Q228 contribute to the ATP site; that span reads RDE. H446 provides a ligand contact to L-aspartate. An ATP-binding site is contributed by E480. Residue R487 coordinates L-aspartate. An ATP-binding site is contributed by 532–535; that stretch reads GLDR.

It belongs to the class-II aminoacyl-tRNA synthetase family. Type 1 subfamily. As to quaternary structure, homodimer.

It is found in the cytoplasm. It carries out the reaction tRNA(Asp) + L-aspartate + ATP = L-aspartyl-tRNA(Asp) + AMP + diphosphate. Functionally, catalyzes the attachment of L-aspartate to tRNA(Asp) in a two-step reaction: L-aspartate is first activated by ATP to form Asp-AMP and then transferred to the acceptor end of tRNA(Asp). This chain is Aspartate--tRNA ligase, found in Bacteroides fragilis (strain YCH46).